A 292-amino-acid chain; its full sequence is uncharacterized protein (292 aa).

Residues L17, D55, N82, and K115 each coordinate NADP(+). The active-site Proton donor is S134. Residues Y148, K152, and T184 each coordinate NADP(+). The active-site Proton acceptor is Y148. K152 functions as the Lowers pKa of active site Tyr in the catalytic mechanism.

This sequence belongs to the short-chain dehydrogenases/reductases (SDR) family.

It is found in the cytoplasm. This is an uncharacterized protein from Schizosaccharomyces pombe (strain 972 / ATCC 24843) (Fission yeast).